We begin with the raw amino-acid sequence, 303 residues long: Aspartate carbamoyltransferase catalytic subunit (303 aa).

Arginine 49 and threonine 50 together coordinate carbamoyl phosphate. Residue lysine 77 coordinates L-aspartate. Carbamoyl phosphate is bound by residues arginine 99, histidine 126, and glutamine 129. Positions 159 and 211 each coordinate L-aspartate. Residues serine 252 and proline 253 each coordinate carbamoyl phosphate.

The protein belongs to the aspartate/ornithine carbamoyltransferase superfamily. ATCase family. In terms of assembly, heterododecamer (2C3:3R2) of six catalytic PyrB chains organized as two trimers (C3), and six regulatory PyrI chains organized as three dimers (R2).

The catalysed reaction is carbamoyl phosphate + L-aspartate = N-carbamoyl-L-aspartate + phosphate + H(+). It functions in the pathway pyrimidine metabolism; UMP biosynthesis via de novo pathway; (S)-dihydroorotate from bicarbonate: step 2/3. Functionally, catalyzes the condensation of carbamoyl phosphate and aspartate to form carbamoyl aspartate and inorganic phosphate, the committed step in the de novo pyrimidine nucleotide biosynthesis pathway. In Listeria monocytogenes serovar 1/2a (strain ATCC BAA-679 / EGD-e), this protein is Aspartate carbamoyltransferase catalytic subunit.